The sequence spans 202 residues: LexA repressor (202 aa).

The H-T-H motif DNA-binding region spans 29–49; sequence VREICEATGLKSTSTVHGHLT. Active-site for autocatalytic cleavage activity residues include Ser126 and Lys163.

The protein belongs to the peptidase S24 family. In terms of assembly, homodimer.

It carries out the reaction Hydrolysis of Ala-|-Gly bond in repressor LexA.. In terms of biological role, represses a number of genes involved in the response to DNA damage (SOS response), including recA and lexA. In the presence of single-stranded DNA, RecA interacts with LexA causing an autocatalytic cleavage which disrupts the DNA-binding part of LexA, leading to derepression of the SOS regulon and eventually DNA repair. This chain is LexA repressor, found in Caldicellulosiruptor saccharolyticus (strain ATCC 43494 / DSM 8903 / Tp8T 6331).